Reading from the N-terminus, the 298-residue chain is Inosose dehydratase 1 (298 aa).

This sequence belongs to the IolE/MocC family. The cofactor is glutathione. Co(2+) is required as a cofactor. Requires Mn(2+) as cofactor.

It catalyses the reaction scyllo-inosose = 3D-3,5/4-trihydroxycyclohexane-1,2-dione + H2O. The protein operates within polyol metabolism; myo-inositol degradation into acetyl-CoA; acetyl-CoA from myo-inositol: step 2/7. In terms of biological role, catalyzes the dehydration of inosose (2-keto-myo-inositol, 2KMI or 2,4,6/3,5-pentahydroxycyclohexanone) to 3D-(3,5/4)-trihydroxycyclohexane-1,2-dione (D-2,3-diketo-4-deoxy-epi-inositol). The sequence is that of Inosose dehydratase 1 from Bacillus cereus (strain ZK / E33L).